Consider the following 363-residue polypeptide: Mitochondrial phosphate carrier protein 2, mitochondrial (363 aa).

Residues 65-85 form a helical membrane-spanning segment; that stretch reads AYFAACTVAGMLSCGITHTAI. 3 Solcar repeats span residues 65-149, 162-246, and 263-342; these read AYFA…AKKY, YKTL…TVEL, and VQLG…VKVL. Over 86–123 the chain is Mitochondrial matrix; sequence TPLDVIKCNMQIDPLKYKNITSAFKTTIKEQGLKGFTR. The chain crosses the membrane as a helical span at residues 124 to 143; the sequence is GWSPTLLGYSAQGAFKYGLY. Topologically, residues 144–164 are mitochondrial intermembrane; it reads EYAKKYYSDIVGPEYAAKYKT. A helical transmembrane segment spans residues 165-185; that stretch reads LIYLAGSASAEIVADVALCPM. Over 186-220 the chain is Mitochondrial matrix; it reads EAVKVRVQTQPGFARGLSDGLPKIIKSEGFRGLHK. The helical transmembrane segment at 221-240 threads the bilayer; that stretch reads GLVPLWGRQIPYTMMKFATF. The Mitochondrial intermembrane segment spans residues 241–261; the sequence is ENTVELIYKKVMPTPKEECSK. A helical transmembrane segment spans residues 262-282; it reads PVQLGVSFAGGYIAGIFCAII. The Mitochondrial matrix portion of the chain corresponds to 283–321; sequence SHPADNLVSFLNNSKGATVADAVKRLGLWGMLTRGLPLR. Residues 322–342 form a helical membrane-spanning segment; it reads IFMIGTLTGAQWVIYDAVKVL. At 343-363 the chain is on the mitochondrial intermembrane side; it reads AGLPTTGGASPATALAPSVSA.

Belongs to the mitochondrial carrier (TC 2.A.29) family. As to expression, expressed in leaves. Strong expression in senescent leaves.

It is found in the mitochondrion inner membrane. Functionally, transport of phosphate groups from the cytosol to the mitochondrial matrix. Mediates salt stress tolerance through an ATP-dependent pathway and via modulation of the gibberellin metabolism. The chain is Mitochondrial phosphate carrier protein 2, mitochondrial (MPT2) from Arabidopsis thaliana (Mouse-ear cress).